The chain runs to 235 residues: Putative N-acetylmannosamine-6-phosphate 2-epimerase (235 aa).

It belongs to the NanE family.

It carries out the reaction an N-acyl-D-glucosamine 6-phosphate = an N-acyl-D-mannosamine 6-phosphate. It functions in the pathway amino-sugar metabolism; N-acetylneuraminate degradation; D-fructose 6-phosphate from N-acetylneuraminate: step 3/5. Its function is as follows. Converts N-acetylmannosamine-6-phosphate (ManNAc-6-P) to N-acetylglucosamine-6-phosphate (GlcNAc-6-P). This Aliivibrio fischeri (strain ATCC 700601 / ES114) (Vibrio fischeri) protein is Putative N-acetylmannosamine-6-phosphate 2-epimerase.